The primary structure comprises 885 residues: Cytosolic carboxypeptidase-like protein 5 (885 aa).

The Peptidase M14 domain occupies 157–570 (YPFSYSDCQD…AMAIAALDMA (414 aa)). The Zn(2+) site is built by H252 and E255. Residues 343–402 (NSQSPSEHQHSSHLPPDAPLSDPEKADSLQNRAHLGRSSSGDKPEAWTQTEVAEQKPNSV) are disordered. The span at 388–402 (AWTQTEVAEQKPNSV) shows a compositional bias: polar residues. H434 lines the Zn(2+) pocket. The active-site Proton donor/acceptor is E516. Disordered regions lie at residues 605-733 (TTVN…LASS) and 783-839 (RLQA…PRPC). Positions 620–640 (PPRSNNGLPVSCSENTLSRAR) are enriched in polar residues. Low complexity-rich tracts occupy residues 641-666 (SFST…NSPS) and 714-733 (PTSS…LASS). S840 bears the Phosphoserine mark.

Belongs to the peptidase M14 family. Requires Zn(2+) as cofactor.

The protein localises to the cytoplasm. It localises to the cytosol. Its subcellular location is the nucleus. It is found in the cytoskeleton. The protein resides in the spindle. The protein localises to the midbody. The catalysed reaction is gamma-L-glutamyl-L-glutamyl-[protein] + H2O = L-glutamyl-[protein] + L-glutamate. The enzyme catalyses (L-glutamyl)(n+1)-gamma-L-glutamyl-L-glutamyl-[protein] + H2O = (L-glutamyl)(n)-gamma-L-glutamyl-L-glutamyl-[protein] + L-glutamate. It carries out the reaction C-terminal L-alpha-aminoacyl-L-glutamyl-[tubulin] + H2O = C-terminal L-alpha-aminoacyl-[tubulin] + L-glutamate. It catalyses the reaction C-terminal L-alpha-aminoacyl-L-glutamyl-L-glutamyl-[tubulin] + H2O = C-terminal L-alpha-aminoacyl-L-glutamyl-[tubulin] + L-glutamate. Its function is as follows. Metallocarboxypeptidase that mediates deglutamylation of tubulin and non-tubulin target proteins. Catalyzes the removal of polyglutamate side chains present on the gamma-carboxyl group of glutamate residues within the C-terminal tail of alpha- and beta-tubulin. Cleaves alpha- and gamma-linked polyglutamate tubulin side-chain, as well as the branching point glutamate. Also catalyzes the removal of alpha-linked glutamate residues from the carboxy-terminus of alpha-tubulin. Mediates deglutamylation of nucleotidyltransferase CGAS, leading to CGAS antiviral defense response activation. The chain is Cytosolic carboxypeptidase-like protein 5 (AGBL5) from Bos taurus (Bovine).